A 466-amino-acid chain; its full sequence is Cysteine--tRNA ligase (466 aa).

Cys28 is a binding site for Zn(2+). The 'HIGH' region signature appears at 30-40; the sequence is PTVYNYIHIGN. Residues Cys208, His233, and Glu237 each coordinate Zn(2+). The 'KMSKS' region motif lies at 265 to 269; that stretch reads KMSKS. Lys268 is an ATP binding site.

Belongs to the class-I aminoacyl-tRNA synthetase family. As to quaternary structure, monomer. Zn(2+) serves as cofactor.

The protein localises to the cytoplasm. The enzyme catalyses tRNA(Cys) + L-cysteine + ATP = L-cysteinyl-tRNA(Cys) + AMP + diphosphate. The polypeptide is Cysteine--tRNA ligase (Staphylococcus saprophyticus subsp. saprophyticus (strain ATCC 15305 / DSM 20229 / NCIMB 8711 / NCTC 7292 / S-41)).